We begin with the raw amino-acid sequence, 257 residues long: Tryptophan synthase alpha chain (257 aa).

Residues Glu47 and Asp58 each act as proton acceptor in the active site.

The protein belongs to the TrpA family. Tetramer of two alpha and two beta chains.

It catalyses the reaction (1S,2R)-1-C-(indol-3-yl)glycerol 3-phosphate + L-serine = D-glyceraldehyde 3-phosphate + L-tryptophan + H2O. The protein operates within amino-acid biosynthesis; L-tryptophan biosynthesis; L-tryptophan from chorismate: step 5/5. The alpha subunit is responsible for the aldol cleavage of indoleglycerol phosphate to indole and glyceraldehyde 3-phosphate. This Listeria monocytogenes serotype 4b (strain F2365) protein is Tryptophan synthase alpha chain.